Reading from the N-terminus, the 147-residue chain is Ribonuclease H (147 aa).

Positions 1 to 142 (MAGKVVMYTD…ADELANRGVR (142 aa)) constitute an RNase H type-1 domain. Positions 10, 48, 70, and 134 each coordinate Mg(2+).

Belongs to the RNase H family. Monomer. Mg(2+) is required as a cofactor.

Its subcellular location is the cytoplasm. It carries out the reaction Endonucleolytic cleavage to 5'-phosphomonoester.. Its function is as follows. Endonuclease that specifically degrades the RNA of RNA-DNA hybrids. In Marinobacter nauticus (strain ATCC 700491 / DSM 11845 / VT8) (Marinobacter aquaeolei), this protein is Ribonuclease H.